Reading from the N-terminus, the 210-residue chain is Thymidylate kinase (210 aa).

14–21 is an ATP binding site; it reads GLDRSGKS.

The protein belongs to the thymidylate kinase family.

The enzyme catalyses dTMP + ATP = dTDP + ADP. The protein operates within pyrimidine metabolism; dTTP biosynthesis. Its function is as follows. Catalyzes the conversion of dTMP to dTDP. This chain is Thymidylate kinase (tmp1), found in Schizosaccharomyces pombe (strain 972 / ATCC 24843) (Fission yeast).